The primary structure comprises 401 residues: Phosrestin-1 (401 aa).

Position 366 is a phosphoserine; by CaMK (serine 366).

Belongs to the arrestin family. In terms of processing, phosphorylated upon light exposure. In terms of tissue distribution, expressed in photoreceptor cells.

Its subcellular location is the cell projection. The protein resides in the rhabdomere. Its function is as follows. Regulates photoreceptor cell deactivation. Arr1 and Arr2 proteins are mediators of rhodopsin inactivation and are essential for the termination of the phototransduction cascade. Involved in regulating normal cycles of per nuclear accumulation in brain circadian neurons and thus is important for normal circadian behavior. In the dark, functions with Arr1 to promote the formation of cytosolic Bdbt foci, which are required for dco localization to photoreceptor nuclei where it phosphorylates and activates degradation of per. This Drosophila melanogaster (Fruit fly) protein is Phosrestin-1 (Arr2).